The primary structure comprises 101 residues: Small ribosomal subunit protein uS14 (101 aa).

It belongs to the universal ribosomal protein uS14 family. Part of the 30S ribosomal subunit. Contacts proteins S3 and S10.

In terms of biological role, binds 16S rRNA, required for the assembly of 30S particles and may also be responsible for determining the conformation of the 16S rRNA at the A site. This is Small ribosomal subunit protein uS14 from Buchnera aphidicola subsp. Schizaphis graminum (strain Sg).